A 549-amino-acid polypeptide reads, in one-letter code: Calcium-dependent protein kinase 5 (549 aa).

Gly2 carries the N-myristoyl glycine lipid modification. The disordered stretch occupies residues 43–69 (DEPAGKKAPRGSAAAADAPHAASMKRG). Over residues 52 to 64 (RGSAAAADAPHAA) the composition is skewed to low complexity. A Protein kinase domain is found at 92 to 350 (YALGRKLGQG…AHEVLCHPWI (259 aa)). ATP is bound by residues 98–106 (LGQGQFGTT) and Lys121. Asp216 serves as the catalytic Proton acceptor. Positions 356-386 (APDRPLDPAVLSRIKQFSAMNKLKKMALRVI) are autoinhibitory domain. EF-hand domains are found at residues 393–428 (EEIA…YGST), 429–464 (LKDT…LNKL), 465–500 (EREE…HNMP), and 501–534 (DAFL…GNMG). The Ca(2+) site is built by Asp406, Asp408, Ser410, Glu417, Asp442, Asp444, Ser446, Thr448, Glu453, Asp478, Asp480, Ser482, Tyr484, Glu489, Asp512, Asp514, Asp516, Arg518, and Glu523.

Belongs to the protein kinase superfamily. Ser/Thr protein kinase family. CDPK subfamily.

The protein resides in the membrane. It carries out the reaction L-seryl-[protein] + ATP = O-phospho-L-seryl-[protein] + ADP + H(+). The enzyme catalyses L-threonyl-[protein] + ATP = O-phospho-L-threonyl-[protein] + ADP + H(+). Its activity is regulated as follows. Activated by calcium. Autophosphorylation may play an important role in the regulation of the kinase activity. Its function is as follows. May play a role in signal transduction pathways that involve calcium as a second messenger. This Oryza sativa subsp. japonica (Rice) protein is Calcium-dependent protein kinase 5.